The following is a 655-amino-acid chain: Probable glucan endo-1,3-beta-glucosidase btgC (655 aa).

Disordered stretches follow at residues 1–61 (MSGD…ATPG) and 89–114 (SGVD…PGSD). The Cytoplasmic portion of the chain corresponds to 1–282 (MSGDPRSFSF…PKPGTGSRKR (282 aa)). A compositionally biased stretch (polar residues) spans 19-33 (DSSQQPLHPTNTMAD). Residues 89-98 (SGVDAFRDTD) show a composition bias toward basic and acidic residues. Residues 283–303 (GWIVGIILAVVIVGAIVGGAV) form a helical; Signal-anchor for type II membrane protein membrane-spanning segment. Residues 304 to 655 (GGTLGNREKE…IPDCGGKTAT (352 aa)) lie on the Extracellular side of the membrane. The tract at residues 305-338 (GTLGNREKESPSSSETASGDEKVNGDLGKDSDEI) is disordered. Residues 323–338 (GDEKVNGDLGKDSDEI) are compositionally biased toward basic and acidic residues. Asn426 carries an N-linked (GlcNAc...) asparagine glycan. The Proton donor role is filled by Glu458. Glu557 serves as the catalytic Nucleophile. Asn576 and Asn602 each carry an N-linked (GlcNAc...) asparagine glycan.

It belongs to the glycosyl hydrolase 17 family.

It is found in the cell membrane. It carries out the reaction Hydrolysis of (1-&gt;3)-beta-D-glucosidic linkages in (1-&gt;3)-beta-D-glucans.. Functionally, glucanases play a role in cell expansion during growth, in cell-cell fusion during mating, and in spore release during sporulation. This enzyme may be involved in beta-glucan degradation. Active on laminarin and lichenan. In Aspergillus terreus (strain NIH 2624 / FGSC A1156), this protein is Probable glucan endo-1,3-beta-glucosidase btgC (btgC).